A 610-amino-acid chain; its full sequence is UvrABC system protein C (610 aa).

The GIY-YIG domain occupies serine 16–valine 94. Positions glutamine 204–valine 239 constitute a UVR domain.

It belongs to the UvrC family. As to quaternary structure, interacts with UvrB in an incision complex.

The protein resides in the cytoplasm. Its function is as follows. The UvrABC repair system catalyzes the recognition and processing of DNA lesions. UvrC both incises the 5' and 3' sides of the lesion. The N-terminal half is responsible for the 3' incision and the C-terminal half is responsible for the 5' incision. In Serratia proteamaculans (strain 568), this protein is UvrABC system protein C.